We begin with the raw amino-acid sequence, 80 residues long: Exodeoxyribonuclease 7 small subunit (80 aa).

Belongs to the XseB family. In terms of assembly, heterooligomer composed of large and small subunits.

Its subcellular location is the cytoplasm. The enzyme catalyses Exonucleolytic cleavage in either 5'- to 3'- or 3'- to 5'-direction to yield nucleoside 5'-phosphates.. Functionally, bidirectionally degrades single-stranded DNA into large acid-insoluble oligonucleotides, which are then degraded further into small acid-soluble oligonucleotides. This chain is Exodeoxyribonuclease 7 small subunit, found in Pseudomonas entomophila (strain L48).